The primary structure comprises 336 residues: Histidinol-phosphate aminotransferase (336 aa).

Residue Lys-204 is modified to N6-(pyridoxal phosphate)lysine.

It belongs to the class-II pyridoxal-phosphate-dependent aminotransferase family. Histidinol-phosphate aminotransferase subfamily. Requires pyridoxal 5'-phosphate as cofactor.

The catalysed reaction is L-histidinol phosphate + 2-oxoglutarate = 3-(imidazol-4-yl)-2-oxopropyl phosphate + L-glutamate. The protein operates within amino-acid biosynthesis; L-histidine biosynthesis; L-histidine from 5-phospho-alpha-D-ribose 1-diphosphate: step 7/9. The protein is Histidinol-phosphate aminotransferase of Thermococcus kodakarensis (strain ATCC BAA-918 / JCM 12380 / KOD1) (Pyrococcus kodakaraensis (strain KOD1)).